The chain runs to 100 residues: Urease subunit gamma (100 aa).

This sequence belongs to the urease gamma subunit family. As to quaternary structure, heterotrimer of UreA (gamma), UreB (beta) and UreC (alpha) subunits. Three heterotrimers associate to form the active enzyme.

The protein resides in the cytoplasm. The catalysed reaction is urea + 2 H2O + H(+) = hydrogencarbonate + 2 NH4(+). It functions in the pathway nitrogen metabolism; urea degradation; CO(2) and NH(3) from urea (urease route): step 1/1. This chain is Urease subunit gamma, found in Staphylococcus epidermidis (strain ATCC 35984 / DSM 28319 / BCRC 17069 / CCUG 31568 / BM 3577 / RP62A).